A 338-amino-acid chain; its full sequence is DNA-directed RNA polymerase subunit alpha (338 aa).

The tract at residues 1–234 is alpha N-terminal domain (alpha-NTD); sequence MIQKNWQELI…DQLEIFVNFE (234 aa). An alpha C-terminal domain (alpha-CTD) region spans residues 250–338; it reads FSPALLKKVD…ELAKRFEEHY (89 aa).

It belongs to the RNA polymerase alpha chain family. Homodimer. The RNAP catalytic core consists of 2 alpha, 1 beta, 1 beta' and 1 omega subunit. When a sigma factor is associated with the core the holoenzyme is formed, which can initiate transcription.

The enzyme catalyses RNA(n) + a ribonucleoside 5'-triphosphate = RNA(n+1) + diphosphate. Functionally, DNA-dependent RNA polymerase catalyzes the transcription of DNA into RNA using the four ribonucleoside triphosphates as substrates. In Xanthobacter autotrophicus (strain ATCC BAA-1158 / Py2), this protein is DNA-directed RNA polymerase subunit alpha.